The chain runs to 443 residues: Probable D-serine dehydratase (443 aa).

The residue at position 116 (Lys116) is an N6-(pyridoxal phosphate)lysine.

This sequence belongs to the serine/threonine dehydratase family. DsdA subfamily. Pyridoxal 5'-phosphate is required as a cofactor.

It carries out the reaction D-serine = pyruvate + NH4(+). The protein is Probable D-serine dehydratase of Bacillus cereus (strain AH187).